Reading from the N-terminus, the 210-residue chain is WASH complex subunit 3 (210 aa).

Positions 49–73 form a coiled coil; the sequence is EEKLASISLRIQQIETTLSILEAKL. Residues 173–210 are disordered; the sequence is LDPNLLDTPDAPVPDAVKKNTLDQDDDSDDGSESSFSD. Residues 195 to 204 are compositionally biased toward acidic residues; sequence DQDDDSDDGS.

Belongs to the CCDC53 family. Component of the WASH complex.

This chain is WASH complex subunit 3, found in Salmo salar (Atlantic salmon).